We begin with the raw amino-acid sequence, 513 residues long: ATP synthase subunit alpha (513 aa).

Residue 169–176 (GDRQTGKT) coordinates ATP.

Belongs to the ATPase alpha/beta chains family. As to quaternary structure, F-type ATPases have 2 components, CF(1) - the catalytic core - and CF(0) - the membrane proton channel. CF(1) has five subunits: alpha(3), beta(3), gamma(1), delta(1), epsilon(1). CF(0) has three main subunits: a(1), b(2) and c(9-12). The alpha and beta chains form an alternating ring which encloses part of the gamma chain. CF(1) is attached to CF(0) by a central stalk formed by the gamma and epsilon chains, while a peripheral stalk is formed by the delta and b chains.

The protein localises to the cell inner membrane. The enzyme catalyses ATP + H2O + 4 H(+)(in) = ADP + phosphate + 5 H(+)(out). Its function is as follows. Produces ATP from ADP in the presence of a proton gradient across the membrane. The alpha chain is a regulatory subunit. The polypeptide is ATP synthase subunit alpha (Shewanella amazonensis (strain ATCC BAA-1098 / SB2B)).